Here is a 386-residue protein sequence, read N- to C-terminus: Oxytocin receptor (386 aa).

The disordered stretch occupies residues 1–31; the sequence is MEGVLAANWSAEAVNSSAAPPEAEGNRTAGP. Residues 1-38 lie on the Extracellular side of the membrane; it reads MEGVLAANWSAEAVNSSAAPPEAEGNRTAGPPQRNEAL. N-linked (GlcNAc...) asparagine glycosylation is found at asparagine 8, asparagine 15, and asparagine 26. Residues 39 to 63 traverse the membrane as a helical segment; sequence ARVEVAVLCLILFLALSGNACVLLA. At 64 to 74 the chain is on the cytoplasmic side; sequence LRTTRHKHSRL. A helical transmembrane segment spans residues 75–97; it reads FFFMKHLSIADLVVAVFQVLPQL. The Extracellular segment spans residues 98–113; the sequence is LWDITFRFYGPDLLCR. Cysteine 112 and cysteine 187 are disulfide-bonded. A helical membrane pass occupies residues 114–135; sequence LVKYLQVVGMFASTYLLLLMSL. The Cytoplasmic segment spans residues 136 to 154; that stretch reads DRCLAICQPLRALRRPADR. A helical membrane pass occupies residues 155-175; sequence LAVLATWLGCLVASAPQVHIF. Residues 176-202 lie on the Extracellular side of the membrane; sequence SLREVADGVFDCWAVFIQPWGPKAYIT. Residues 203-225 traverse the membrane as a helical segment; sequence WITLAVYIVPVIVLAACYGLISF. The Cytoplasmic portion of the chain corresponds to 226 to 277; the sequence is KIWQNLRLKTAAEAAEAIAGTEGAAAGSRGRAALARVSSVKLISKAKIRTVK. A helical membrane pass occupies residues 278 to 296; it reads MTFIIVLAFIVCWTPFFFV. Residues 297–311 lie on the Extracellular side of the membrane; that stretch reads QMWSVWDADAPKEAS. Residues 312 to 334 form a helical membrane-spanning segment; the sequence is AFIIAMLLASLNSCCNPWIYMLF. The Cytoplasmic segment spans residues 335–386; sequence TGHLFHELVQRFLCCSSSHLKTSRPGETSVSKKSNSSTFVLSQHSSSQKSCS. Polar residues predominate over residues 355–375; sequence KTSRPGETSVSKKSNSSTFVL. A disordered region spans residues 355–386; the sequence is KTSRPGETSVSKKSNSSTFVLSQHSSSQKSCS. Residues serine 368 and serine 370 each carry the phosphoserine modification. Low complexity predominate over residues 376–386; sequence SQHSSSQKSCS.

This sequence belongs to the G-protein coupled receptor 1 family. Vasopressin/oxytocin receptor subfamily.

The protein localises to the cell membrane. Receptor for oxytocin. The activity of this receptor is mediated by G proteins which activate a phosphatidylinositol-calcium second messenger system. In Sus scrofa (Pig), this protein is Oxytocin receptor (OXTR).